Here is a 172-residue protein sequence, read N- to C-terminus: Translationally-controlled tumor protein homolog (172 aa).

Positions Met-1–Cys-172 constitute a TCTP domain.

Belongs to the TCTP family. As to expression, expressed by the venom gland.

It is found in the secreted. Its function is as follows. Venom protein that causes edema, enhances vascular permeability and is likely related to the inflammatory activity of the venom. The sequence is that of Translationally-controlled tumor protein homolog from Crotalus adamanteus (Eastern diamondback rattlesnake).